The following is a 296-amino-acid chain: Maltose/maltodextrin transport system permease protein MalG (296 aa).

Topologically, residues 1 to 12 (MAMVQPKSQKWR) are cytoplasmic. A helical transmembrane segment spans residues 13-35 (LLATHLLMFTFIAMILFPLLMVI). The Periplasmic segment spans residues 36–88 (TISLRPGNFATGSLIPENISWEHWKLALGYSVVSPDGRVTPPPFPVMLWLWNS). Residues 85-281 (LWNSVKVAFI…LPITIVFLVA (197 aa)) enclose the ABC transmembrane type-1 domain. A helical transmembrane segment spans residues 89-111 (VKVAFITAVGIVTLSTTCAYAFA). The Cytoplasmic portion of the chain corresponds to 112 to 123 (RMHFRGKSTLLK). Residues 124–143 (GMLIFQMFPAVLSLVALYAL) traverse the membrane as a helical segment. The Periplasmic portion of the chain corresponds to 144–152 (FDRLGEYVP). Residues 153-175 (FIGLNTHGGVIFAYLGGIALHVW) form a helical membrane-spanning segment. Over 176–205 (TIKGYFETIDGSLEEAAALDGATPWQAFRM) the chain is Cytoplasmic. A helical membrane pass occupies residues 206–228 (VLLPLSVPILAVVFILSFIGVIT). Over 229–257 (EVPVASLLLRDVNNYTLAVGMQQYLNPQN) the chain is Periplasmic. Residues 258–280 (YLWGDFAAAAVLSALPITIVFLV) form a helical membrane-spanning segment. Over 281–296 (AQRWLVSGLTAGGVKG) the chain is Cytoplasmic.

The protein belongs to the binding-protein-dependent transport system permease family. MalFG subfamily. In terms of assembly, the complex is composed of two ATP-binding proteins (MalK), two transmembrane proteins (MalG and MalF) and a solute-binding protein (MalE).

It is found in the cell inner membrane. Part of the ABC transporter complex MalEFGK involved in maltose/maltodextrin import. Probably responsible for the translocation of the substrate across the membrane. This Photorhabdus laumondii subsp. laumondii (strain DSM 15139 / CIP 105565 / TT01) (Photorhabdus luminescens subsp. laumondii) protein is Maltose/maltodextrin transport system permease protein MalG (malG).